The sequence spans 257 residues: MNISPKAIKVRNIWIGGTEPCICAPVVGEDDRKVLREAEEVCRKQPDLLEWRADFFRAIDDQERVLATANGLRNIAGEIPILFTIRSEREGGQPIPLNEAEVRRLIEAICRSGAIDLVDYELAYGERIADVRRMTEECSVWLVVSRHYFDGTPRKETLLADMRQAERYGADIAKVAVMPKSPEDVLVLLQATEEARRELAIPLITMAMGGLGAITRLAGWLFGSAVTFAVGNQSSAPGQIPIDDVRTVLSILQTYSR.

Residues 50 to 52 (EWR) and R86 contribute to the 3-dehydroquinate site. Residue H147 is the Proton donor/acceptor of the active site. K174 functions as the Schiff-base intermediate with substrate in the catalytic mechanism. 3-dehydroquinate is bound by residues R216, S235, and Q239.

This sequence belongs to the type-I 3-dehydroquinase family. Homodimer.

The catalysed reaction is 3-dehydroquinate = 3-dehydroshikimate + H2O. It participates in metabolic intermediate biosynthesis; chorismate biosynthesis; chorismate from D-erythrose 4-phosphate and phosphoenolpyruvate: step 3/7. Functionally, involved in the third step of the chorismate pathway, which leads to the biosynthesis of aromatic amino acids. Catalyzes the cis-dehydration of 3-dehydroquinate (DHQ) and introduces the first double bond of the aromatic ring to yield 3-dehydroshikimate. In Geobacillus kaustophilus (strain HTA426), this protein is 3-dehydroquinate dehydratase.